The primary structure comprises 152 residues: Ribonuclease pancreatic gamma-type (152 aa).

A signal peptide spans 1-25 (MGLEKSLFLFSLLVLVLGWVQPSLG). Substrate-binding residues include lysine 35 and arginine 38. Histidine 40 (proton acceptor) is an active-site residue. 4 cysteine pairs are disulfide-bonded: cysteine 54/cysteine 112, cysteine 68/cysteine 123, cysteine 86/cysteine 138, and cysteine 93/cysteine 100. Substrate is bound by residues 69–73 (KSMNT), lysine 94, and arginine 113. The Proton donor role is filled by histidine 147.

It belongs to the pancreatic ribonuclease family. In terms of assembly, monomer.

The protein resides in the secreted. It catalyses the reaction an [RNA] containing cytidine + H2O = an [RNA]-3'-cytidine-3'-phosphate + a 5'-hydroxy-ribonucleotide-3'-[RNA].. The enzyme catalyses an [RNA] containing uridine + H2O = an [RNA]-3'-uridine-3'-phosphate + a 5'-hydroxy-ribonucleotide-3'-[RNA].. Functionally, endonuclease that catalyzes the cleavage of RNA on the 3' side of pyrimidine nucleotides. Acts on single-stranded and double-stranded RNA. The chain is Ribonuclease pancreatic gamma-type from Rattus norvegicus (Rat).